An 86-amino-acid polypeptide reads, in one-letter code: Precursor of CEP4 (86 aa).

The signal sequence occupies residues methionine 1–alanine 30. The propeptide occupies alanine 31–aspartate 64. Residues glutamine 63 to proline 86 are disordered. Residues proline 68 and proline 73 each carry the hydroxyproline modification. Positions lysine 80–proline 86 are excised as a propeptide.

Belongs to the C-terminally encoded plant signaling peptide (CEP) family. As to quaternary structure, interacts with CEP receptors (e.g. CEPR1 and CEPR2). Post-translationally, the mature small signaling peptide is generated by proteolytic processing of the longer precursor. As to expression, expressed at low levels in flowers. Present in lateral roots, shoot apical meristem (SAM), flowers and siliques.

The protein localises to the secreted. It is found in the extracellular space. The protein resides in the apoplast. In terms of biological role, extracellular signaling peptide that represses primary root growth rate. Promotes shoot growth and modulates leaf morphology. Regulates systemic nitrogen (N)-demand signaling. Mediates up-regulation of genes involved in N uptake and assimilation pathways. The chain is Precursor of CEP4 from Arabidopsis thaliana (Mouse-ear cress).